Reading from the N-terminus, the 382-residue chain is MPQRQPQPAHPADGIYFGLMSGTSMDGVDGVAVRFEAGRAPVVLAEAFVGFAQSLRDALFALQQPGDNEIDRESLAANALVARYAVCCHELQRTAGLSRDEIRAIGVHGQTVRHRPERGYTRQLNNPALLAELTQVDVIADFRSRDVAAGGHGAPLAPAFHATVFGAPGETRVVCNLGGISNITILPGGDGDVRGFDCGPANALIDAWATRHLGKPYDDGGKFAARGTVQASLLDALLDEPYFTAPPPKSTGRDLFNPAWLDARLAAFPQVAPEDVQATLTALTAVSVAREIAQHAPGCKAVFVCGGGARNPVLLDALRHALREAGVPASVDTTAALGVPPQQVEALAFAWLAYRFTARQPGNLATVTGAAGNRVLGALYPR.

22–29 contacts ATP; it reads GTSMDGVD.

It belongs to the anhydro-N-acetylmuramic acid kinase family.

The catalysed reaction is 1,6-anhydro-N-acetyl-beta-muramate + ATP + H2O = N-acetyl-D-muramate 6-phosphate + ADP + H(+). It functions in the pathway amino-sugar metabolism; 1,6-anhydro-N-acetylmuramate degradation. The protein operates within cell wall biogenesis; peptidoglycan recycling. In terms of biological role, catalyzes the specific phosphorylation of 1,6-anhydro-N-acetylmuramic acid (anhMurNAc) with the simultaneous cleavage of the 1,6-anhydro ring, generating MurNAc-6-P. Is required for the utilization of anhMurNAc either imported from the medium or derived from its own cell wall murein, and thus plays a role in cell wall recycling. The chain is Anhydro-N-acetylmuramic acid kinase from Burkholderia orbicola (strain MC0-3).